The following is an 867-amino-acid chain: V-set and immunoglobulin domain-containing protein 10-like (867 aa).

The first 27 residues, methionine 1–glycine 27, serve as a signal peptide directing secretion. Residues leucine 28–alanine 776 are Extracellular-facing. Asparagine 32 is a glycosylation site (N-linked (GlcNAc...) asparagine). Residues serine 35–serine 45 are compositionally biased toward low complexity. The segment at serine 35–tryptophan 60 is disordered. Residues asparagine 88, asparagine 96, and asparagine 144 are each glycosylated (N-linked (GlcNAc...) asparagine). The tract at residues leucine 104–histidine 186 is disordered. Positions threonine 137–lysine 153 are enriched in polar residues. Basic and acidic residues predominate over residues proline 159–leucine 170. Polar residues predominate over residues serine 173–histidine 186. Ig-like C2-type domains follow at residues proline 302–serine 394 and proline 402–asparagine 487. Cysteine 324 and cysteine 378 are oxidised to a cystine. A glycan (N-linked (GlcNAc...) asparagine) is linked at asparagine 423. Cysteine 428 and cysteine 471 are oxidised to a cystine. N-linked (GlcNAc...) asparagine glycosylation occurs at asparagine 487. Residues alanine 602–arginine 627 form a disordered region. N-linked (GlcNAc...) asparagine glycosylation is found at asparagine 641 and asparagine 650. Residues isoleucine 777–leucine 797 form a helical membrane-spanning segment. Residues cysteine 798–leucine 867 are Cytoplasmic-facing.

Expressed in the esophagus, particularly in the suprabasilar layers of the epithelium. Expression is largely reduced in esophageal metaplasia, dysplasia, and adenocarcinoma lesions.

Its subcellular location is the membrane. The polypeptide is V-set and immunoglobulin domain-containing protein 10-like (VSIG10L) (Homo sapiens (Human)).